The sequence spans 244 residues: Small ribosomal subunit protein eS4 (244 aa).

The region spanning 43-106 is the S4 RNA-binding domain; it reads LPLLLVVRDV…DETYLVLFDE (64 aa).

Belongs to the eukaryotic ribosomal protein eS4 family.

In Methanococcus maripaludis (strain DSM 14266 / JCM 13030 / NBRC 101832 / S2 / LL), this protein is Small ribosomal subunit protein eS4.